Consider the following 73-residue polypeptide: Translation initiation factor IF-1 (73 aa).

Residues 1–72 (MSKDDLIQFT…TKGRVILRHQ (72 aa)) form the S1-like domain.

Belongs to the IF-1 family. As to quaternary structure, component of the 30S ribosomal translation pre-initiation complex which assembles on the 30S ribosome in the order IF-2 and IF-3, IF-1 and N-formylmethionyl-tRNA(fMet); mRNA recruitment can occur at any time during PIC assembly.

Its subcellular location is the cytoplasm. Functionally, one of the essential components for the initiation of protein synthesis. Stabilizes the binding of IF-2 and IF-3 on the 30S subunit to which N-formylmethionyl-tRNA(fMet) subsequently binds. Helps modulate mRNA selection, yielding the 30S pre-initiation complex (PIC). Upon addition of the 50S ribosomal subunit IF-1, IF-2 and IF-3 are released leaving the mature 70S translation initiation complex. The sequence is that of Translation initiation factor IF-1 from Rickettsia bellii (strain OSU 85-389).